Reading from the N-terminus, the 377-residue chain is Nitric oxide reductase FlRd-NAD(+) reductase (377 aa).

The protein belongs to the FAD-dependent oxidoreductase family. Requires FAD as cofactor.

It localises to the cytoplasm. It catalyses the reaction 2 reduced [nitric oxide reductase rubredoxin domain] + NAD(+) + H(+) = 2 oxidized [nitric oxide reductase rubredoxin domain] + NADH. It functions in the pathway nitrogen metabolism; nitric oxide reduction. Its function is as follows. One of at least two accessory proteins for anaerobic nitric oxide (NO) reductase. Reduces the rubredoxin moiety of NO reductase. This is Nitric oxide reductase FlRd-NAD(+) reductase from Escherichia coli O45:K1 (strain S88 / ExPEC).